Reading from the N-terminus, the 416-residue chain is uncharacterized protein (416 aa).

[4Fe-4S] cluster contacts are provided by C63, C75, C78, and C152. Q253, F280, E300, and D348 together coordinate S-adenosyl-L-methionine. Residue C374 is the Nucleophile of the active site.

Belongs to the class I-like SAM-binding methyltransferase superfamily. RNA M5U methyltransferase family.

This is an uncharacterized protein from Agrobacterium fabrum (strain C58 / ATCC 33970) (Agrobacterium tumefaciens (strain C58)).